The following is a 287-amino-acid chain: Glutamate racemase (287 aa).

The span at 1-15 (MATKPQDANTTSREA) shows a compositional bias: polar residues. A disordered region spans residues 1–25 (MATKPQDANTTSREAITSKADSPPR). Substrate-binding positions include 32–33 (DS) and 64–65 (YG). The active-site Proton donor/acceptor is the Cys96. 97 to 98 (NT) contributes to the substrate binding site. Cys208 functions as the Proton donor/acceptor in the catalytic mechanism. 209–210 (TH) contacts substrate.

This sequence belongs to the aspartate/glutamate racemases family.

It catalyses the reaction L-glutamate = D-glutamate. It functions in the pathway cell wall biogenesis; peptidoglycan biosynthesis. In terms of biological role, provides the (R)-glutamate required for cell wall biosynthesis. The protein is Glutamate racemase of Yersinia pseudotuberculosis serotype O:3 (strain YPIII).